A 222-amino-acid chain; its full sequence is Small ribosomal subunit protein uS3 (222 aa).

The KH type-2 domain occupies 38–106 (IRKFISEKLA…NVHINIVEIK (69 aa)).

Belongs to the universal ribosomal protein uS3 family. As to quaternary structure, part of the 30S ribosomal subunit. Forms a tight complex with proteins S10 and S14.

Its function is as follows. Binds the lower part of the 30S subunit head. Binds mRNA in the 70S ribosome, positioning it for translation. The chain is Small ribosomal subunit protein uS3 from Lactobacillus johnsonii (strain CNCM I-12250 / La1 / NCC 533).